Here is a 360-residue protein sequence, read N- to C-terminus: uncharacterized protein (360 aa).

Positions 4 to 235 (LSLQHIQKIY…PANMFVSGFI (232 aa)) constitute an ABC transporter domain. 37 to 44 (GPSGCGKS) contacts ATP.

This sequence belongs to the ABC transporter superfamily.

This is an uncharacterized protein from Escherichia coli (strain K12).